A 428-amino-acid polypeptide reads, in one-letter code: Beta-1,3-galactosyl-O-glycosyl-glycoprotein beta-1,6-N-acetylglucosaminyltransferase (428 aa).

The Cytoplasmic segment spans residues 1–9 (MLRNLFRRR). The mediates interaction with GOLPH3 and is necessary and sufficient for localization to the Golgi stretch occupies residues 5 to 9 (LFRRR). Residues 10–32 (LFSCPTKYYFMLLVLSLITFSVL) form a helical; Signal-anchor for type II membrane protein membrane-spanning segment. The segment at 33–121 (RIHQKPEFFS…EPLTKEEVGF (89 aa)) is stem region. Residues 33-428 (RIHQKPEFFS…RHKALENLEH (396 aa)) are Lumenal-facing. 2 N-linked (GlcNAc...) asparagine glycosylation sites follow: N58 and N95. 4 disulfide bridges follow: C59–C413, C100–C172, C151–C199, and C372–C381. The segment at 122 to 428 (PIAYSIVVHH…RHKALENLEH (307 aa)) is catalytic. UDP-N-acetyl-alpha-D-glucosamine is bound by residues 128 to 130 (VVH), 155 to 157 (DRK), and Y187. A glycoprotein is bound by residues E243, N250, K251, R254, E320, K341, and Y358. The Nucleophile role is filled by E320. The UDP-N-acetyl-alpha-D-glucosamine site is built by R378 and K401.

It belongs to the glycosyltransferase 14 family. As to quaternary structure, interacts with GOLPH3; may control GCNT1 retention in the Golgi. N-glycosylated. As to expression, expressed in kidney, liver, stomach, spleen, lung and brain.

The protein resides in the golgi apparatus membrane. It catalyses the reaction a 3-O-[beta-D-galactosyl-(1-&gt;3)-N-acetyl-alpha-D-galactosaminyl]-L-seryl-[protein] + UDP-N-acetyl-alpha-D-glucosamine = 3-O-{beta-D-galactosyl-(1-&gt;3)-[N-acetyl-beta-D-glucosaminyl-(1-&gt;6)]-N-acetyl-alpha-D-galactosaminyl}-L-seryl-[protein] + UDP + H(+). The catalysed reaction is a 3-O-[beta-D-galactosyl-(1-&gt;3)-N-acetyl-alpha-D-galactosaminyl]-L-threonyl-[protein] + UDP-N-acetyl-alpha-D-glucosamine = a 3-O-{beta-D-galactosyl-(1-&gt;3)-[N-acetyl-beta-D-glucosaminyl-(1-&gt;6)]-N-acetyl-alpha-D-galactosaminyl}-L-threonyl-[protein] + UDP + H(+). It carries out the reaction a globoside GalGb4Cer + UDP-N-acetyl-alpha-D-glucosamine = a globoside GlcNAc-(beta1-&gt;6)-GalGb4Cer + UDP + H(+). The enzyme catalyses a ganglioside GA1 + UDP-N-acetyl-alpha-D-glucosamine = a ganglioside beta-D-GlcNAc-(1-&gt;6)-GA1 + UDP + H(+). It participates in protein modification; protein glycosylation. It functions in the pathway glycolipid biosynthesis. Inactivated by thiol-reactive agents. Inhibited by free UDP. Glycosyltransferase that catalyzes the transfer of an N-acetylglucosamine (GlcNAc) moiety in beta1-6 linkage from UDP-GlcNAc onto mucin-type core 1 O-glycan to form the branched mucin-type core 2 O-glycan. The catalysis is metal ion-independent and occurs with inversion of the anomeric configuration of sugar donor. Selectively involved in synthesis of mucin-type core 2 O-glycans that serve as scaffolds for the display of selectin ligand sialyl Lewis X epitope by myeloid cells, with an impact on homeostasis and recruitment to inflammatory sites. Can also act on glycolipid substrates. Transfers GlcNAc moiety to GalGb4Cer globosides in a reaction step to the synthesis of stage-specific embryonic antigen 1 (SSEA-1) determinant. Can use Galbeta1-3GalNAcalpha1-R and Galbeta1-3GalNAcbeta1-R oligosaccharide derivatives as acceptor substrates. This is Beta-1,3-galactosyl-O-glycosyl-glycoprotein beta-1,6-N-acetylglucosaminyltransferase (Gcnt1) from Mus musculus (Mouse).